The following is a 555-amino-acid chain: Probable terpene synthase 6 (555 aa).

Residues Asp309, Asp313, and Glu460 each coordinate Mg(2+). The short motif at 309–313 (DDTYD) is the DDXXD motif element.

This sequence belongs to the terpene synthase family. It depends on Mg(2+) as a cofactor.

Probable sesquiterpene synthase. The protein is Probable terpene synthase 6 (TPS6) of Ricinus communis (Castor bean).